Here is a 159-residue protein sequence, read N- to C-terminus: 6,7-dimethyl-8-ribityllumazine synthase (159 aa).

5-amino-6-(D-ribitylamino)uracil contacts are provided by residues tyrosine 23, 58–60 (AYE), and 82–84 (TII). The active-site Proton donor is the histidine 90. Isoleucine 115 serves as a coordination point for 5-amino-6-(D-ribitylamino)uracil. Arginine 129 provides a ligand contact to (2S)-2-hydroxy-3-oxobutyl phosphate.

Belongs to the DMRL synthase family. Forms an icosahedral capsid composed of 60 subunits, arranged as a dodecamer of pentamers.

It carries out the reaction (2S)-2-hydroxy-3-oxobutyl phosphate + 5-amino-6-(D-ribitylamino)uracil = 6,7-dimethyl-8-(1-D-ribityl)lumazine + phosphate + 2 H2O + H(+). Its pathway is cofactor biosynthesis; riboflavin biosynthesis; riboflavin from 2-hydroxy-3-oxobutyl phosphate and 5-amino-6-(D-ribitylamino)uracil: step 1/2. Catalyzes the formation of 6,7-dimethyl-8-ribityllumazine by condensation of 5-amino-6-(D-ribitylamino)uracil with 3,4-dihydroxy-2-butanone 4-phosphate. This is the penultimate step in the biosynthesis of riboflavin. The sequence is that of 6,7-dimethyl-8-ribityllumazine synthase from Buchnera aphidicola subsp. Baizongia pistaciae (strain Bp).